The following is a 68-amino-acid chain: DNA-directed RNA polymerase subunit Rpo10 (68 aa).

The Zn(2+) site is built by Cys7, Cys10, Cys44, and Cys45.

The protein belongs to the archaeal Rpo10/eukaryotic RPB10 RNA polymerase subunit family. Part of the RNA polymerase complex. The cofactor is Zn(2+).

The protein localises to the cytoplasm. It carries out the reaction RNA(n) + a ribonucleoside 5'-triphosphate = RNA(n+1) + diphosphate. In terms of biological role, DNA-dependent RNA polymerase (RNAP) catalyzes the transcription of DNA into RNA using the four ribonucleoside triphosphates as substrates. In Methanococcus maripaludis (strain C7 / ATCC BAA-1331), this protein is DNA-directed RNA polymerase subunit Rpo10.